Here is a 187-residue protein sequence, read N- to C-terminus: MTALTGRPVVYCGVCSLPPEYCEYGGTVKKCQQWLEKNQPTMYSRIWSPEVLEAEMASLSVEAQERAMKDAKKKAAKAEAAEQKQADKRANSVVTIKRIERNKRKYVTSVSGLEAFGLELKKVAKDFGKKFATGSSVTKVPSGGEEIVVQGDVSGEIEEFILEKYKEVPEDNIELVEDKKKKKGEGN.

In terms of domain architecture, SUI1 spans 94–165 (VTIKRIERNK…EIEEFILEKY (72 aa)).

This sequence belongs to the DENR family. Interacts with the 40S ribosomal subunit.

The protein localises to the cytoplasm. This chain is Translation machinery-associated protein 22 (tma-22), found in Neurospora crassa (strain ATCC 24698 / 74-OR23-1A / CBS 708.71 / DSM 1257 / FGSC 987).